Here is a 326-residue protein sequence, read N- to C-terminus: ELAV-like protein 1-B (326 aa).

3 consecutive RRM domains span residues 20-98, 106-186, and 244-322; these read TNLI…FARP, ANLY…FAAN, and WCIF…FKTS.

It belongs to the RRM elav family. As to quaternary structure, interacts (via RRM3) with cirbp. Unable to form oligomers. Part of a ribonucleoprotein (RNP) complex, at least composed of elavl1/elrA and/or elavl2/elrB, igf2bp3/vg1RBP, ddx6/Xp54, ybx2/frgy2, lsm14b/rap55b and, in a subset of RNP complexes, stau1/staufen.

It localises to the cytoplasm. It is found in the cell cortex. Functionally, RNA-binding protein that binds to the 3'-UTR region of mRNAs and increases their stability. Involved in embryonic stem cells (ESCs) differentiation: preferentially binds mRNAs that are not methylated by N6-methyladenosine (m6A), stabilizing them, promoting ESCs differentiation. Binds to poly-U elements and AU-rich elements (AREs) in the 3'-UTR of target mRNAs. Acts cooperatively with cribp to stabilize AU-rich sequence (ARE)-containing mRNAs. May play a role during gastrulation. Required for the vegetal localization of vg1 mRNA. The protein is ELAV-like protein 1-B (elavl1-b) of Xenopus laevis (African clawed frog).